We begin with the raw amino-acid sequence, 485 residues long: Adenosylhomocysteinase (485 aa).

Positions 64, 139, and 205 each coordinate substrate. An NAD(+)-binding site is contributed by 206–208; the sequence is TTT. Substrate-binding residues include lysine 235 and aspartate 239. NAD(+) is bound by residues asparagine 240, 269–274, glutamate 292, asparagine 327, 348–350, and asparagine 397; these read GYGDVG and IGH.

It belongs to the adenosylhomocysteinase family. In terms of assembly, homotetramer. The cofactor is NAD(+).

The enzyme catalyses S-adenosyl-L-homocysteine + H2O = L-homocysteine + adenosine. It participates in amino-acid biosynthesis; L-homocysteine biosynthesis; L-homocysteine from S-adenosyl-L-homocysteine: step 1/1. Its function is as follows. Adenosylhomocysteine is a competitive inhibitor of S-adenosyl-L-methionine-dependent methyl transferase reactions; therefore adenosylhomocysteinase may play a key role in the control of methylations via regulation of the intracellular concentration of adenosylhomocysteine. The protein is Adenosylhomocysteinase (SAHH) of Catharanthus roseus (Madagascar periwinkle).